A 618-amino-acid chain; its full sequence is Tyrosine-protein kinase ZAP-70 (618 aa).

The SH2 1 domain occupies 10–102; sequence FFYGSISRAE…GLPCNLRKPC (93 aa). Residues 103–162 are interdomain A; that stretch reads NRPPGLEPQPGVFDCLRDAMVRDYVRQTWKLEGDALEQAIISQAPQVEKLIATTAHERMP. An SH2 2 domain is found at 163 to 254; that stretch reads WYHSSLTREE…GLIYRLKEVC (92 aa). Residue Tyr-248 is modified to Phosphotyrosine. Positions 255–336 are interdomain B; that stretch reads PNSSASAAVA…KKLFLKRENL (82 aa). Positions 270–320 are disordered; the sequence is AHPSTFTQPQRRVDTLNSDGYTPEPARLASSTDKPRPMPMDTSVYESPYSD. The segment covering 273 to 289 has biased composition (polar residues); that stretch reads STFTQPQRRVDTLNSDG. Position 287 is a phosphoserine (Ser-287). Tyr-290 is modified (phosphotyrosine). Tyr-314 bears the Phosphotyrosine; by LCK mark. Tyr-318 carries the phosphotyrosine modification. Residues 337 to 597 form the Protein kinase domain; sequence LVADIELGCG…VEQRMRNYYY (261 aa). ATP-binding positions include 343–351 and Lys-368; that span reads LGCGNFGSV. Asp-460 serves as the catalytic Proton acceptor. Phosphotyrosine occurs at positions 491 and 492. Lys-543 is covalently cross-linked (Glycyl lysine isopeptide (Lys-Gly) (interchain with G-Cter in ubiquitin)).

The protein belongs to the protein kinase superfamily. Tyr protein kinase family. SYK/ZAP-70 subfamily. Interacts with CD247/CD3Z; this interaction docks ZAP70 at the stimulated TCR. Interacts with NFAM1. Interacts with adapter protein SLA; this interaction negatively regulates T-cell receptor signaling. Interacts with VAV1. Interacts with CBL; this interaction promotes ubiquitination, internalization and subsequent degradation of CD247/CD3Z. Identified in a complex with CBL and UBE2L3. Interacts with SHB. Interacts with adapter protein SLA2; this interaction negatively regulates T-cell receptor signaling. Interacts with CBLB. Interacts (via SH2 domains) with RHOH; this interaction regulates ZAP70 subcellular localization. Interacts with DEF6. Interacts (ubiquitinated form) with OTUD7B and UBASH3B. Post-translationally, phosphorylated on tyrosine residues upon T-cell antigen receptor (TCR) stimulation. Phosphorylation of Tyr-314 and Tyr-314 are essential for ZAP70 positive function on T-lymphocyte activation whereas Tyr-290 has a negative regulatory role. Within the C-terminal kinase domain, Tyr-491 and Tyr-492 are phosphorylated after TCR induction, Tyr-491 playing a negative regulatory role and Tyr-492 a positive. Tyr-492 is dephosphorylated by PTN22. In terms of processing, ubiquitinated in response to T cell activation. Deubiquitinated by OTUD7B. As to expression, isoform 1 and isoform 2 are expressed in thymus, spleen and lymph nodes.

The protein localises to the cytoplasm. It localises to the cell membrane. It carries out the reaction L-tyrosyl-[protein] + ATP = O-phospho-L-tyrosyl-[protein] + ADP + H(+). Activated by phosphorylation at Tyr-492 in the activation loop. Functionally, tyrosine kinase that plays an essential role in regulation of the adaptive immune response. Regulates motility, adhesion and cytokine expression of mature T-cells, as well as thymocyte development. Also contributes to the development and activation of primary B-lymphocytes. When antigen presenting cells (APC) activate T-cell receptor (TCR), a serie of phosphorylations lead to the recruitment of ZAP70 to the doubly phosphorylated TCR component CD3Z through ITAM motif at the plasma membrane. This recruitment serves to localization to the stimulated TCR and to relieve its autoinhibited conformation. Release of ZAP70 active conformation is further stabilized by phosphorylation mediated by LCK. Subsequently, ZAP70 phosphorylates at least 2 essential adapter proteins: LAT and LCP2. In turn, a large number of signaling molecules are recruited and ultimately lead to lymphokine production, T-cell proliferation and differentiation. Furthermore, ZAP70 controls cytoskeleton modifications, adhesion and mobility of T-lymphocytes, thus ensuring correct delivery of effectors to the APC. ZAP70 is also required for TCR-CD3Z internalization and degradation through interaction with the E3 ubiquitin-protein ligase CBL and adapter proteins SLA and SLA2. Thus, ZAP70 regulates both T-cell activation switch on and switch off by modulating TCR expression at the T-cell surface. During thymocyte development, ZAP70 promotes survival and cell-cycle progression of developing thymocytes before positive selection (when cells are still CD4/CD8 double negative). Additionally, ZAP70-dependent signaling pathway may also contribute to primary B-cells formation and activation through B-cell receptor (BCR). This is Tyrosine-protein kinase ZAP-70 (Zap70) from Mus musculus (Mouse).